Consider the following 121-residue polypeptide: Apoptin (121 aa).

2 disordered regions span residues 1–28 (MNAL…LETP) and 57–121 (LRSA…CIRL). Positions 58 to 70 (RSATADNSESTGF) are enriched in polar residues. Positions 88-102 (RSCDPSEYRVSELKE) are enriched in basic and acidic residues.

Belongs to the gyrovirus apoptin family.

It is found in the host nucleus. In terms of biological role, may act as transcriptional regulator. Induces apoptosis in infected cells. Element of infectious replication cycle. This Gallus gallus (Chicken) protein is Apoptin (VP3).